A 291-amino-acid polypeptide reads, in one-letter code: Methyl-CpG-binding domain protein 3 (291 aa).

The MBD domain maps to Met-1–Ser-72. Positions Met-1–Arg-80 are required for interaction with MBD2. Residue Ser-56 is modified to Phosphoserine. Residues Ser-60 to Arg-80 are required for interaction with MBD3L2. A Glycyl lysine isopeptide (Lys-Gly) (interchain with G-Cter in SUMO2) cross-link involves residue Lys-73. Ser-85 carries the post-translational modification Phosphoserine. Residues Lys-90 and Lys-92 each participate in a glycyl lysine isopeptide (Lys-Gly) (interchain with G-Cter in SUMO2) cross-link. Phosphoserine is present on Ser-144. Residues Lys-216–Ala-245 are a coiled coil. The span at Leu-254–Ala-267 shows a compositional bias: basic and acidic residues. Residues Leu-254–Val-291 are disordered. Positions Glu-268–Val-291 are enriched in acidic residues.

In terms of assembly, heterodimer (via N-terminus) with MBD2. Component of the MeCP1 histone deacetylase complex. Component of the nucleosome remodeling and deacetylase (NuRD) repressor complex, composed of core proteins MTA1, MTA2, MTA3, RBBP4, RBBP7, HDAC1, HDAC2, MBD2, MBD3, and peripherally associated proteins CDK2AP1, CDK2AP2, GATAD2A, GATAD2B, CHD3, CHD4 and CHD5. The exact stoichiometry of the NuRD complex is unknown, and some subunits such as MBD2 and MBD3, GATAD2A and GATAD2B, and CHD3, CHD4 and CHD5 define mutually exclusive NuRD complexes. Interacts with MBD3L2 (via N-terminus); the interaction is direct. Interacts with BCL6. Interacts with CDK2AP1. Interacts with HDAC1. Interacts with MTA2. Interacts with DNMT1. Interacts with GATAD2A. Interacts with GATAD2B. Does not interact with PWWP2A. Does not interact with PWWP2B.

Its subcellular location is the nucleus. The protein localises to the chromosome. Functionally, acts as a component of the histone deacetylase NuRD complex which participates in the remodeling of chromatin. Acts as transcriptional repressor and plays a role in gene silencing. Does not bind to methylated DNA by itself. Binds to a lesser degree DNA containing unmethylated CpG dinucleotides. Recruits histone deacetylases and DNA methyltransferases. In Homo sapiens (Human), this protein is Methyl-CpG-binding domain protein 3 (MBD3).